We begin with the raw amino-acid sequence, 871 residues long: Bifunctional cordycepin biosynthesis cluster protein 3 (871 aa).

It participates in secondary metabolite biosynthesis. Its function is as follows. Nucleoside/nucleotide kinase; part of the gene cluster that mediates the biosynthesis of cordycepin (COR) and pentostatin (PTN), two adenosine analogs with related bioactivity profiles as both mimic adenosine and can inhibit some of the processes that are adenosine dependent. Within the pathway, cns3 catalyzes both the first step of cordycepin biosynthesis by phosphorylating adenosine into 3'-AMP via its kinase activity and the conversion of adenosine into pentostatin via its ATP phosphoribosyltransferase activity. The first step of cordycepin biosynthesis involves hydroxyl phosphorylation of the 3'-OH position on adenosine to produce adenosine-3'-monophosphate (3'-AMP), catalyzed by kinase activity of cns3. Next, 3'-AMP is dephosphorylated to 2'-carbonyl-3'-deoxyadenosine (2'-C-3'-dA) by cns2, which is finally converted to cordycepin (3'-deoxyadenosine) by the oxidoreductase cns1. The chain is Bifunctional cordycepin biosynthesis cluster protein 3 from Cordyceps militaris (strain CM01) (Caterpillar fungus).